A 459-amino-acid chain; its full sequence is Exodeoxyribonuclease 7 large subunit (459 aa).

Belongs to the XseA family. As to quaternary structure, heterooligomer composed of large and small subunits.

The protein resides in the cytoplasm. It catalyses the reaction Exonucleolytic cleavage in either 5'- to 3'- or 3'- to 5'-direction to yield nucleoside 5'-phosphates.. Functionally, bidirectionally degrades single-stranded DNA into large acid-insoluble oligonucleotides, which are then degraded further into small acid-soluble oligonucleotides. The chain is Exodeoxyribonuclease 7 large subunit from Yersinia pseudotuberculosis serotype IB (strain PB1/+).